Reading from the N-terminus, the 435-residue chain is MIRKMSKNVVVIGTQWGDEGKGKIVDWLAESVQGVVRFQGGHNAGHTLWINGKKTILRLIPSGIMHDGVTCFIGNGVVLSPEALLREIEELEAAGLDVRSRLQVSEICTLILPYHVAVDKAREARKGEGKIGTTGRGIGPAYEDKVARRALRVQDLFNPALFDEKLAEVLDYHNFVLTQYLGAEPVSANEVRDQAMALAPALAPMVRDVSSNLFALQQEGKNLLFEGAQGALLDVDHGTYPFVTSSNCVAGAASAGAGVGPQALQYVLGITKAYTTRVGSGPFPTELVDEIGARLATIGKEFGSVTGRPRRCGWLDGAALKRSVRLNGISGLCITKLDVLDGLETIQLGVGYRVNGEFRDVLPYGAHAVAQAQAVLEELPGWTESTVGITEYSKLPVNARRYLERVAEVCGVPIDLVSTGPDRNKTIVLRHPFKG.

GTP is bound by residues 17–23 (GDEGKGK) and 45–47 (GHT). Catalysis depends on aspartate 18, which acts as the Proton acceptor. Residues aspartate 18 and glycine 45 each contribute to the Mg(2+) site. Residues 18-21 (DEGK), 43-46 (NAGH), threonine 134, arginine 148, glutamine 229, threonine 244, and arginine 308 contribute to the IMP site. Histidine 46 (proton donor) is an active-site residue. 304-310 (SVTGRPR) is a substrate binding site. GTP-binding positions include arginine 310, 336–338 (KLD), and 418–420 (STG).

The protein belongs to the adenylosuccinate synthetase family. Homodimer. Requires Mg(2+) as cofactor.

Its subcellular location is the cytoplasm. The enzyme catalyses IMP + L-aspartate + GTP = N(6)-(1,2-dicarboxyethyl)-AMP + GDP + phosphate + 2 H(+). It functions in the pathway purine metabolism; AMP biosynthesis via de novo pathway; AMP from IMP: step 1/2. Functionally, plays an important role in the de novo pathway of purine nucleotide biosynthesis. Catalyzes the first committed step in the biosynthesis of AMP from IMP. This is Adenylosuccinate synthetase from Bordetella pertussis (strain Tohama I / ATCC BAA-589 / NCTC 13251).